An 89-amino-acid chain; its full sequence is MGDVAAKIKIMPESIETDLAELKEKIKAVIPAKADLHGDIVEEPIAFGLKALIVTLIVNDEEGGTEPAEEAFAKVSGVENVQVLEAYRI.

It belongs to the EF-1-beta/EF-1-delta family.

In terms of biological role, promotes the exchange of GDP for GTP in EF-1-alpha/GDP, thus allowing the regeneration of EF-1-alpha/GTP that could then be used to form the ternary complex EF-1-alpha/GTP/AAtRNA. This Methanosarcina acetivorans (strain ATCC 35395 / DSM 2834 / JCM 12185 / C2A) protein is Elongation factor 1-beta.